The chain runs to 493 residues: Probable cytochrome P450 6a13 (493 aa).

Cys435 contacts heme.

Belongs to the cytochrome P450 family. Heme is required as a cofactor.

The protein localises to the endoplasmic reticulum membrane. It is found in the microsome membrane. In terms of biological role, may be involved in the metabolism of insect hormones and in the breakdown of synthetic insecticides. This Drosophila melanogaster (Fruit fly) protein is Probable cytochrome P450 6a13 (Cyp6a13).